A 680-amino-acid polypeptide reads, in one-letter code: tRNA 5-methylaminomethyl-2-thiouridine biosynthesis bifunctional protein MnmC (680 aa).

Residues 1–267 (MTAEPNKPCQ…MAAILSSDAP (267 aa)) form a tRNA (mnm(5)s(2)U34)-methyltransferase region. Positions 273 to 680 (IGGGLASAHL…LRKLLKGKAL (408 aa)) are FAD-dependent cmnm(5)s(2)U34 oxidoreductase.

It in the N-terminal section; belongs to the methyltransferase superfamily. tRNA (mnm(5)s(2)U34)-methyltransferase family. The protein in the C-terminal section; belongs to the DAO family. FAD serves as cofactor.

The protein resides in the cytoplasm. It carries out the reaction 5-aminomethyl-2-thiouridine(34) in tRNA + S-adenosyl-L-methionine = 5-methylaminomethyl-2-thiouridine(34) in tRNA + S-adenosyl-L-homocysteine + H(+). Functionally, catalyzes the last two steps in the biosynthesis of 5-methylaminomethyl-2-thiouridine (mnm(5)s(2)U) at the wobble position (U34) in tRNA. Catalyzes the FAD-dependent demodification of cmnm(5)s(2)U34 to nm(5)s(2)U34, followed by the transfer of a methyl group from S-adenosyl-L-methionine to nm(5)s(2)U34, to form mnm(5)s(2)U34. The chain is tRNA 5-methylaminomethyl-2-thiouridine biosynthesis bifunctional protein MnmC from Shewanella putrefaciens (strain CN-32 / ATCC BAA-453).